Consider the following 109-residue polypeptide: Large ribosomal subunit protein uL24 (109 aa).

This sequence belongs to the universal ribosomal protein uL24 family. In terms of assembly, part of the 50S ribosomal subunit.

Its function is as follows. One of two assembly initiator proteins, it binds directly to the 5'-end of the 23S rRNA, where it nucleates assembly of the 50S subunit. One of the proteins that surrounds the polypeptide exit tunnel on the outside of the subunit. The sequence is that of Large ribosomal subunit protein uL24 from Mesoplasma florum (strain ATCC 33453 / NBRC 100688 / NCTC 11704 / L1) (Acholeplasma florum).